The sequence spans 260 residues: MIPALWIAKTGLDAQQINMNVIANNLANVNTNGFKRSKAIFEDLIYHTVQQPGSKSSEETISPSGFQLGTGVRPITTEREHSQGNLSKTNSLKDVAINGNGFFQVQLPDGNAAYTRDGSFQINPNGQLVTNNGFLIQPVINFPANGNNMSVSRDGIITVRIPEQTQPIRVGKLYLANFVNDSGLSNIGENLYQETEASGNPSISSPGSHGTGLLYQSYVETSNVNIAEELVNMIQAQRAYEINSKVITTADQMLQKLSLL.

Positions 52 to 67 are enriched in polar residues; that stretch reads PGSKSSEETISPSGFQ. Residues 52 to 71 form a disordered region; it reads PGSKSSEETISPSGFQLGTG.

This sequence belongs to the flagella basal body rod proteins family. In terms of assembly, the basal body constitutes a major portion of the flagellar organelle and consists of four rings (L,P,S, and M) mounted on a central rod. The rod consists of about 26 subunits of FlgG in the distal portion, and FlgB, FlgC and FlgF are thought to build up the proximal portion of the rod with about 6 subunits each.

It localises to the bacterial flagellum basal body. This is Flagellar basal-body rod protein FlgG (flgG) from Buchnera aphidicola subsp. Baizongia pistaciae (strain Bp).